The following is a 556-amino-acid chain: Glutamine--tRNA ligase (556 aa).

The 'HIGH' region motif lies at 35 to 45 (PEPNGYLHIGH). Residues 36-38 (EPN) and 42-48 (HIGHAKS) contribute to the ATP site. L-glutamine-binding residues include aspartate 68 and tyrosine 213. Residues threonine 232 and 262-263 (RL) each bind ATP. Residues 269–273 (VTSKR) carry the 'KMSKS' region motif.

The protein belongs to the class-I aminoacyl-tRNA synthetase family. Monomer.

It is found in the cytoplasm. The enzyme catalyses tRNA(Gln) + L-glutamine + ATP = L-glutaminyl-tRNA(Gln) + AMP + diphosphate. This Pseudomonas aeruginosa (strain LESB58) protein is Glutamine--tRNA ligase.